Consider the following 530-residue polypeptide: Phosphoenolpyruvate carboxykinase (ATP) (530 aa).

Substrate is bound by residues Arg-57, Tyr-193, and Lys-199. Residues Lys-199, His-218, and Gly-234–Thr-242 contribute to the ATP site. Residues Lys-199 and His-218 each contribute to the Mn(2+) site. Residue Asp-255 coordinates Mn(2+). Positions 283, 320, and 445 each coordinate ATP. A substrate-binding site is contributed by Arg-320.

The protein belongs to the phosphoenolpyruvate carboxykinase (ATP) family. The cofactor is Mn(2+).

The protein resides in the cytoplasm. It catalyses the reaction oxaloacetate + ATP = phosphoenolpyruvate + ADP + CO2. It participates in carbohydrate biosynthesis; gluconeogenesis. Functionally, involved in the gluconeogenesis. Catalyzes the conversion of oxaloacetate (OAA) to phosphoenolpyruvate (PEP) through direct phosphoryl transfer between the nucleoside triphosphate and OAA. This chain is Phosphoenolpyruvate carboxykinase (ATP), found in Leptospira biflexa serovar Patoc (strain Patoc 1 / Ames).